The sequence spans 861 residues: Glucans biosynthesis glucosyltransferase H (861 aa).

6 helical membrane passes run 142–162, 188–208, 516–536, 573–593, 600–620, and 683–703; these read FILL…MKGI, VLPY…FCWV, VFLT…FLVL, LFST…MLIW, FGGV…SVLL, and FLWW…VSVI.

The protein belongs to the glycosyltransferase 2 family. OpgH subfamily.

The protein localises to the cell inner membrane. It participates in glycan metabolism; osmoregulated periplasmic glucan (OPG) biosynthesis. Its function is as follows. Involved in the biosynthesis of osmoregulated periplasmic glucans (OPGs). The chain is Glucans biosynthesis glucosyltransferase H from Pseudomonas aeruginosa (strain UCBPP-PA14).